The following is a 133-amino-acid chain: Large ribosomal subunit protein uL15 (133 aa).

The interval 1-64 (MGLENLKPAK…QPLQRRLPKI (64 aa)) is disordered.

This sequence belongs to the universal ribosomal protein uL15 family. As to quaternary structure, part of the 50S ribosomal subunit.

Functionally, binds to the 23S rRNA. This chain is Large ribosomal subunit protein uL15, found in Helicobacter pylori (strain Shi470).